Consider the following 303-residue polypeptide: L(+)-tartrate dehydratase subunit alpha (303 aa).

Iron-sulfur cluster contacts are provided by C71, C190, and C277.

It belongs to the class-I fumarase family. Tetramer of two alpha and two beta subunits. Iron-sulfur cluster serves as cofactor.

The catalysed reaction is (2R,3R)-tartrate = oxaloacetate + H2O. The protein is L(+)-tartrate dehydratase subunit alpha (ttdA) of Escherichia coli O6:H1 (strain CFT073 / ATCC 700928 / UPEC).